A 457-amino-acid polypeptide reads, in one-letter code: MAEVRGVQRVLFGDWLLGEVSSGQYEGLQWLNEARTVFRVPWKHFGRRDLDEEDAQIFKAWAVARGRWPPSGVNLPPPEAEAAERRERRGWKTNFRCALHSTGRFILRQDNSGDPVDPHKVYELSRELGSTVGPATENREEVSLSNALPTQGVSPGSFLARENAGLQTPSPLLSSDAGDLLLQVLQYSHILESESGADPVPPQAPGQEQDRVYEEPYAAWQVEAVPSPRPQQPALTERSLGFLDVTIMYKGRTVLQAVVGHPRCVFLYSPMAPAVRTSEPQPVIFPSPAELPDQKQLHYTETLLQHVSPGLQLELRGPSLWALRMGKCKVYWEVGSPMGTTGPSTPPQLLERNRHTPIFDFSTFFRELEEFRARRRQGSPHYTIYLGFGQDLSAGRPKEKTLILVKLEPWVCKAYLEGVQREGVSSLDSSSLGLCLSSTNSLYEDIEHFLMDLGQWP.

The IRF tryptophan pentad repeat DNA-binding region spans 9–126; sequence RVLFGDWLLG…DPHKVYELSR (118 aa). Position 92 is an N6-acetyllysine; by KAT2A and KAT2B (K92). Residues 238–410 are necessary for the interaction with NMI; that stretch reads RSLGFLDVTI…TLILVKLEPW (173 aa). K329 participates in a covalent cross-link: Glycyl lysine isopeptide (Lys-Gly) (interchain with G-Cter in ubiquitin). Residues K398 and K400 each participate in a glycyl lysine isopeptide (Lys-Gly) (interchain with G-Cter in SUMO) cross-link. Residues S425, S426, and S429 each carry the phosphoserine modification. S431 carries the phosphoserine; by TBK1 and IKKE modification. A phosphoserine mark is found at S437, S438, and S441.

Belongs to the IRF family. In terms of assembly, monomer. Homodimer; phosphorylation-induced. Heterodimer with IRF3. Interacts with TICAM1 and TICAM2. Interacts with MYD88 and TRAF6. Interacts with NMI; the interaction is direct and leads to the inhibition of IRF7-mediated type I IFN production. Interacts with GBP4; preventing interaction between TRAF6 and IRF7, resulting in impaired TRAF6-mediated IRF7 ubiquitination. Interacts with TARBP2; this interaction prevents IRF7 phosphorylation and activation. Post-translationally, acetylation inhibits its DNA-binding ability and activity. In terms of processing, in response to a viral infection, phosphorylated by TBK1 and IKBKE1. Phosphorylation, and subsequent activation is inhibited by vaccinia virus protein E3. In TLR7- and TLR9-mediated signaling pathway, phosphorylated by IRAK1. TRAF6-mediated ubiquitination is required for IRF7 activation. TRIM35 mediates IRF7 'Lys-48'-linked polyubiquitination and subsequent proteasomal degradation. 'Lys-48'-linked polyubiquitination and subsequent proteasomal degradation is NMI-dependent in response to Sendai virus infection. Ubiquitinated by UBE3C, leading to its degradation. Post-translationally, sumoylated by TRIM28, which inhibits its transactivation activity. In terms of processing, 'Lys-63'-linked ubiquitination by NEURL3 promotes IRF7 activation.

Its subcellular location is the nucleus. The protein localises to the cytoplasm. With respect to regulation, in the absence of viral infection, maintained as a monomer in an autoinhibited state and phosphorylation disrupts this autoinhibition leading to the liberation of the DNA-binding and dimerization activities and its nuclear localization where it can activate type I IFN and ISG genes. Key transcriptional regulator of type I interferon (IFN)-dependent immune responses and plays a critical role in the innate immune response against DNA and RNA viruses. Regulates the transcription of type I IFN genes (IFN-alpha and IFN-beta) and IFN-stimulated genes (ISG) by binding to an interferon-stimulated response element (ISRE) in their promoters. Can efficiently activate both the IFN-beta (IFNB) and the IFN-alpha (IFNA) genes and mediate their induction via both the virus-activated, MyD88-independent pathway and the TLR-activated, MyD88-dependent pathway. Induces transcription of ubiquitin hydrolase USP25 mRNA in response to lipopolysaccharide (LPS) or viral infection in a type I IFN-dependent manner. Required during both the early and late phases of the IFN gene induction but is more critical for the late than for the early phase. Exists in an inactive form in the cytoplasm of uninfected cells and following viral infection, double-stranded RNA (dsRNA), or toll-like receptor (TLR) signaling, becomes phosphorylated by IKBKE and TBK1 kinases. This induces a conformational change, leading to its dimerization and nuclear localization where along with other coactivators it can activate transcription of the type I IFN and ISG genes. Can also play a role in regulating adaptive immune responses by inducing PSMB9/LMP2 expression, either directly or through induction of IRF1. Binds to the Q promoter (Qp) of EBV nuclear antigen 1 a (EBNA1) and may play a role in the regulation of EBV latency. Can activate distinct gene expression programs in macrophages and regulate the anti-tumor properties of primary macrophages. This Mus musculus (Mouse) protein is Interferon regulatory factor 7 (Irf7).